Here is a 399-residue protein sequence, read N- to C-terminus: Argininosuccinate synthase (399 aa).

8-16 serves as a coordination point for ATP; it reads AYSGGLDTS. Tyr-87 provides a ligand contact to L-citrulline. Gly-117 provides a ligand contact to ATP. The L-aspartate site is built by Thr-119, Asn-123, and Asp-124. L-citrulline is bound at residue Asn-123. Positions 127, 175, 259, and 271 each coordinate L-citrulline.

Belongs to the argininosuccinate synthase family. Type 1 subfamily. In terms of assembly, homotetramer.

It localises to the cytoplasm. It catalyses the reaction L-citrulline + L-aspartate + ATP = 2-(N(omega)-L-arginino)succinate + AMP + diphosphate + H(+). It participates in amino-acid biosynthesis; L-arginine biosynthesis; L-arginine from L-ornithine and carbamoyl phosphate: step 2/3. The sequence is that of Argininosuccinate synthase from Corynebacterium diphtheriae (strain ATCC 700971 / NCTC 13129 / Biotype gravis).